A 430-amino-acid chain; its full sequence is UDP-N-acetylglucosamine 1-carboxyvinyltransferase (430 aa).

22–23 (KN) contributes to the phosphoenolpyruvate binding site. Arg102 contributes to the UDP-N-acetyl-alpha-D-glucosamine binding site. Cys126 serves as the catalytic Proton donor. The residue at position 126 (Cys126) is a 2-(S-cysteinyl)pyruvic acid O-phosphothioketal. Residues 131–135 (RPVDL), 172–175 (KVSV), Asp317, and Ile339 each bind UDP-N-acetyl-alpha-D-glucosamine.

It belongs to the EPSP synthase family. MurA subfamily.

It localises to the cytoplasm. The catalysed reaction is phosphoenolpyruvate + UDP-N-acetyl-alpha-D-glucosamine = UDP-N-acetyl-3-O-(1-carboxyvinyl)-alpha-D-glucosamine + phosphate. It functions in the pathway cell wall biogenesis; peptidoglycan biosynthesis. Cell wall formation. Adds enolpyruvyl to UDP-N-acetylglucosamine. The sequence is that of UDP-N-acetylglucosamine 1-carboxyvinyltransferase from Rhizobium johnstonii (strain DSM 114642 / LMG 32736 / 3841) (Rhizobium leguminosarum bv. viciae).